A 1289-amino-acid chain; its full sequence is SH3 domain and tetratricopeptide repeat-containing protein 2 (1289 aa).

SH3 domains lie at 176 to 239 and 267 to 330; these read EGHF…PLPV and IGRG…LDSC. Residues 393–442 form a disordered region; the sequence is SQPEGFREARSGGTWMERQTIGSRRSSGSGDSSPEEDELISASSDSYHLP. Low complexity predominate over residues 414 to 424; it reads GSRRSSGSGDS. 8 TPR repeats span residues 529–562, 758–791, 837–870, 1002–1038, 1085–1119, 1120–1153, 1167–1200, and 1211–1245; these read ARLC…LDGA, RTLC…GKLL, GVVH…AREM, GQLL…FVDL, LKLY…LARR, MKAL…ATLA, LVAF…CPPW, and AKVY…AVLM.

The chain is SH3 domain and tetratricopeptide repeat-containing protein 2 (Sh3tc2) from Mus musculus (Mouse).